Reading from the N-terminus, the 210-residue chain is Orotate phosphoribosyltransferase (210 aa).

5-phospho-alpha-D-ribose 1-diphosphate is bound by residues R96, K100, H102, and 122–130; that span reads EDLISTGGS. An orotate-binding site is contributed by S126.

This sequence belongs to the purine/pyrimidine phosphoribosyltransferase family. PyrE subfamily. Homodimer. Mg(2+) is required as a cofactor.

It carries out the reaction orotidine 5'-phosphate + diphosphate = orotate + 5-phospho-alpha-D-ribose 1-diphosphate. It participates in pyrimidine metabolism; UMP biosynthesis via de novo pathway; UMP from orotate: step 1/2. Its function is as follows. Catalyzes the transfer of a ribosyl phosphate group from 5-phosphoribose 1-diphosphate to orotate, leading to the formation of orotidine monophosphate (OMP). In Streptococcus pneumoniae serotype 4 (strain ATCC BAA-334 / TIGR4), this protein is Orotate phosphoribosyltransferase.